The following is a 116-amino-acid chain: MSFCSFFGGEIFQNHFEPGIYVCAKCGYELFSSRSKYAHSSPWPAFTETIHADSVAKRPEHNRPGAIKVSCGRCGNGLGHEFLNDGPKRGQSRFUIFSSSLKFIPKAEETSASQGQ.

A MsrB domain is found at 1–106; it reads MSFCSFFGGE…FSSSLKFIPK (106 aa). The Zn(2+) site is built by C23, C26, C71, and C74. U95 acts as the Nucleophile in catalysis. A non-standard amino acid (selenocysteine) is located at residue U95.

Belongs to the MsrB Met sulfoxide reductase family. Requires Zn(2+) as cofactor. Post-translationally, truncated MSRB1/SEPX1 proteins produced by failed UGA/Sec decoding are ubiquitinated by the CRL2(FEM1C) E3 ubiquitin-protein ligase complex.

Its subcellular location is the cytoplasm. The protein localises to the nucleus. The protein resides in the cytoskeleton. It catalyses the reaction L-methionyl-[protein] + [thioredoxin]-disulfide + H2O = L-methionyl-(R)-S-oxide-[protein] + [thioredoxin]-dithiol. The enzyme catalyses [thioredoxin]-disulfide + L-methionine + H2O = L-methionine (R)-S-oxide + [thioredoxin]-dithiol. In terms of biological role, methionine-sulfoxide reductase that specifically reduces methionine (R)-sulfoxide back to methionine. While in many cases, methionine oxidation is the result of random oxidation following oxidative stress, methionine oxidation is also a post-translational modification that takes place on specific residue. Acts as a regulator of actin assembly by reducing methionine (R)-sulfoxide mediated by MICALs (MICAL1, MICAL2 or MICAL3) on actin, thereby promoting filament repolymerization. Plays a role in innate immunity by reducing oxidized actin, leading to actin repolymerization in macrophages. This chain is Methionine-R-sulfoxide reductase B1 (MSRB1), found in Bos taurus (Bovine).